Consider the following 254-residue polypeptide: Homeobox protein BarH-like 1 (254 aa).

Residues 1 to 20 (MQRPGEPGAARFGPPEGCAD) are disordered. The segment at residues 142 to 201 (GRRSRTVFTELQLMGLEKRFEKQKYLSTPDRIDLAESLGLSQLQVKTWYQNRRMKWKKIV) is a DNA-binding region (homeobox). The disordered stretch occupies residues 204–254 (GGGLESPTKPKGRPKKNSIPTSEQLTEQERAKDAEKPAEVPGEPSDRSRED). Over residues 230-254 (EQERAKDAEKPAEVPGEPSDRSRED) the composition is skewed to basic and acidic residues.

This sequence belongs to the BAR homeobox family. Widely expressed. Expressed at higher levels in testis and heart. Detected in craniofacial tissue and adult iris, but not in lymphocytes, fibroblasts, choroid retina, retinal pigment epithelium, kidney, or fetal liver.

It is found in the nucleus. Its function is as follows. Transcription factor, which is involved in craniofacial development, in odontogenesis and in stomach organogenesis. May have a role in the differentiation of molars from incisors. Plays a role in suppressing endodermal Wnt activity. Binds to a regulatory module of the NCAM promoter. This is Homeobox protein BarH-like 1 (BARX1) from Homo sapiens (Human).